A 344-amino-acid chain; its full sequence is Uroporphyrinogen decarboxylase (344 aa).

Residues 23–27 (RQAGR), Asp73, Tyr149, Thr204, and His321 contribute to the substrate site.

The protein belongs to the uroporphyrinogen decarboxylase family. In terms of assembly, homodimer.

The protein localises to the cytoplasm. It catalyses the reaction uroporphyrinogen III + 4 H(+) = coproporphyrinogen III + 4 CO2. It participates in porphyrin-containing compound metabolism; protoporphyrin-IX biosynthesis; coproporphyrinogen-III from 5-aminolevulinate: step 4/4. Functionally, catalyzes the decarboxylation of four acetate groups of uroporphyrinogen-III to yield coproporphyrinogen-III. This Francisella tularensis subsp. mediasiatica (strain FSC147) protein is Uroporphyrinogen decarboxylase.